A 412-amino-acid polypeptide reads, in one-letter code: GTPase Obg (412 aa).

One can recognise an Obg domain in the interval 1-159; the sequence is MKFLDQAKIF…RWIWLRLKMI (159 aa). Positions 160–327 constitute an OBG-type G domain; sequence ADAGLVGLPN…ILARLFTHIR (168 aa). GTP-binding positions include 166–173, 191–195, 212–215, 279–282, and 308–310; these read GLPNAGKS, FTTLH, DIPG, NKCD, and SGV. S173 and T193 together coordinate Mg(2+). Residues 335-412 are disordered; that stretch reads AVPAASPIFG…ADDEEDDAEE (78 aa). Positions 385-412 are enriched in acidic residues; the sequence is NDGDEVDEDYDDEDLEEVADDEEDDAEE.

This sequence belongs to the TRAFAC class OBG-HflX-like GTPase superfamily. OBG GTPase family. In terms of assembly, monomer. Requires Mg(2+) as cofactor.

It is found in the cytoplasm. Its function is as follows. An essential GTPase which binds GTP, GDP and possibly (p)ppGpp with moderate affinity, with high nucleotide exchange rates and a fairly low GTP hydrolysis rate. Plays a role in control of the cell cycle, stress response, ribosome biogenesis and in those bacteria that undergo differentiation, in morphogenesis control. This chain is GTPase Obg, found in Paramagnetospirillum magneticum (strain ATCC 700264 / AMB-1) (Magnetospirillum magneticum).